The chain runs to 230 residues: Cytidylate kinase (230 aa).

10 to 18 (GPAGSGKST) contributes to the ATP binding site.

The protein belongs to the cytidylate kinase family. Type 1 subfamily.

Its subcellular location is the cytoplasm. It carries out the reaction CMP + ATP = CDP + ADP. The enzyme catalyses dCMP + ATP = dCDP + ADP. This chain is Cytidylate kinase, found in Leptospira borgpetersenii serovar Hardjo-bovis (strain JB197).